Consider the following 245-residue polypeptide: Uridylate kinase (245 aa).

12 to 15 (KISG) contributes to the ATP binding site. Glycine 55 lines the UMP pocket. ATP is bound by residues glycine 56 and arginine 60. UMP contacts are provided by residues aspartate 76 and 137–144 (AGAPYLTT). The ATP site is built by threonine 164, tyrosine 171, and aspartate 174.

The protein belongs to the UMP kinase family. Homohexamer.

The protein resides in the cytoplasm. It carries out the reaction UMP + ATP = UDP + ADP. The protein operates within pyrimidine metabolism; CTP biosynthesis via de novo pathway; UDP from UMP (UMPK route): step 1/1. Its activity is regulated as follows. Inhibited by UTP. Functionally, catalyzes the reversible phosphorylation of UMP to UDP. The polypeptide is Uridylate kinase (Chlamydia trachomatis serovar D (strain ATCC VR-885 / DSM 19411 / UW-3/Cx)).